The sequence spans 187 residues: 3'-5' DNA exonuclease Cap18 (187 aa).

Residues 9-173 (VSVDVETSGP…HDARYQAELF (165 aa)) enclose the Exonuclease domain. Positions 12, 25, 160, and 165 each coordinate Mg(2+). The active-site Proton donor/acceptor is the His160.

This sequence belongs to the Cap18 exonuclease family. In terms of assembly, homodimer.

Its function is as follows. Effector component of a CBASS antivirus system. CBASS (cyclic oligonucleotide-based antiphage signaling system) provides immunity against bacteriophage. The CD-NTase protein synthesizes cyclic nucleotides in response to infection; these serve as specific second messenger signals. The signals activate a diverse range of effectors, leading to bacterial cell death and thus abortive phage infection. A type III CBASS system. A sequence non-specific 3'-5' DNA exonuclease that preferentially degrades ssDNA with 3' overhangs or a mismatch at the 3' end. Expression of this CBASS system (Cap17-CapW-CdnC-Cap7-Cap6-Cap18-Cap19) in a susceptible E.coli (strain JP313) confers resistance to bacteriophage lambda cI--. The sequence is that of 3'-5' DNA exonuclease Cap18 from Escherichia coli.